A 144-amino-acid chain; its full sequence is Large ribosomal subunit protein uL15 (144 aa).

Positions 1 to 57 are disordered; sequence MRFNELQPAKGSRFAGKRLGRGIGSGLGKTSGKGHKGQKARSGGYHKVGFEGGQMPL. Over residues 21 to 31 the composition is skewed to gly residues; it reads RGIGSGLGKTS.

The protein belongs to the universal ribosomal protein uL15 family. In terms of assembly, part of the 50S ribosomal subunit.

Functionally, binds to the 23S rRNA. In Dichelobacter nodosus (strain VCS1703A), this protein is Large ribosomal subunit protein uL15.